A 449-amino-acid polypeptide reads, in one-letter code: UDP-N-acetylmuramoylalanine--D-glutamate ligase (449 aa).

Residue 113 to 119 coordinates ATP; the sequence is GTNGKTT.

Belongs to the MurCDEF family.

The protein resides in the cytoplasm. The catalysed reaction is UDP-N-acetyl-alpha-D-muramoyl-L-alanine + D-glutamate + ATP = UDP-N-acetyl-alpha-D-muramoyl-L-alanyl-D-glutamate + ADP + phosphate + H(+). The protein operates within cell wall biogenesis; peptidoglycan biosynthesis. Cell wall formation. Catalyzes the addition of glutamate to the nucleotide precursor UDP-N-acetylmuramoyl-L-alanine (UMA). This Gloeothece citriformis (strain PCC 7424) (Cyanothece sp. (strain PCC 7424)) protein is UDP-N-acetylmuramoylalanine--D-glutamate ligase.